Reading from the N-terminus, the 472-residue chain is Riboflavin transporter RibJ (472 aa).

Over 1–11 (MLPCFTRKPVD) the chain is Cytoplasmic. Residues 12-32 (HPLGFLVALSGLLMQLMSYGI) form a helical membrane-spanning segment. Residues 33-58 (DNSYSIFSDDMHKDPSLGYPSVTTIS) are Extracellular-facing. Residues 59 to 79 (LGNSVSLGLSPAFGVLCGFLV) traverse the membrane as a helical segment. The Cytoplasmic portion of the chain corresponds to 80–85 (DRVPPR). The helical transmembrane segment at 86–106 (LMMAVSTLMLFAGLWLSSTFA) threads the bilayer. Residues 107-108 (HN) lie on the Extracellular side of the membrane. A glycan (N-linked (GlcNAc...) asparagine) is linked at Asn-108. Residues 109–129 (VTAVTFSYCLLASISSACMLS) form a helical membrane-spanning segment. Topologically, residues 130-144 (PGAAATSSWFNRYQG) are cytoplasmic. The helical transmembrane segment at 145–165 (LAMGINFSGGGVGSAIIPSLA) threads the bilayer. The Extracellular portion of the chain corresponds to 166–179 (GKWVVAYGWRKTFR). The helical transmembrane segment at 180–196 (LMSAFCAIGVVATLLSA) threads the bilayer. Topologically, residues 197-271 (RRAPPKKEEA…TMFSRAFLGN (75 aa)) are cytoplasmic. The disordered stretch occupies residues 200 to 248 (PPKKEEAGPSEYDEGQERQEQGEEEQAHTDEENRNNNNSNGETTPARRG). Positions 214-233 (GQERQEQGEEEQAHTDEENR) are enriched in basic and acidic residues. The helical transmembrane segment at 272 to 292 (FFCWLIFSWAFYSLIYVAVPY) threads the bilayer. Residues 293–315 (VSSMGKAGTVYADISPIPTDIAS) lie on the Extracellular side of the membrane. Residues 316-336 (TLFTFYGVFQIVGSILVGWLA) form a helical membrane-spanning segment. Over 337-341 (TGTTN) the chain is Cytoplasmic. The helical transmembrane segment at 342–362 (EFAYVLCATIGGIFCAFLGFC) threads the bilayer. The Extracellular segment spans residues 363–365 (RSY). A helical membrane pass occupies residues 366 to 386 (VAFALLLCVIGFCMAGMFAVM). Over 387–399 (PALIAERLYGPNL) the chain is Cytoplasmic. Residues 400 to 420 (GFYMGAVFLAGVVGGFSAPPI) form a helical membrane-spanning segment. Residues 421–434 (QAELQQRHYGNYTY) lie on the Extracellular side of the membrane. N-linked (GlcNAc...) asparagine glycosylation occurs at Asn-431. A helical transmembrane segment spans residues 435–455 (VCVFMSACMTLAAAVCYITMW). Residues 456-472 (RDKRVRIVSAAAEAKLA) lie on the Cytoplasmic side of the membrane.

This sequence belongs to the major facilitator superfamily. RibJ family.

The protein localises to the cell membrane. Its function is as follows. Transporter involved in riboflavin (vitamin B2) uptake. Also transports FMN and FAD. The chain is Riboflavin transporter RibJ from Trypanosoma cruzi (strain CL Brener).